We begin with the raw amino-acid sequence, 326 residues long: ELAV-like protein 1 (326 aa).

RRM domains lie at 20–98 (TNLI…VARP), 106–186 (ANLY…FAAN), and 244–322 (WCIF…FKTS).

Belongs to the RRM elav family. Interacts (via RRM3) with cirbp. Unable to form oligomers. Part of a ribonucleoprotein (RNP) complex, at least composed of elavl1/elrA and/or elavl2/elrB, igf2bp3/vg1RBP, ddx6/Xp54, ybx2/frgy2, lsm14b/rap55b and, in a subset of RNP complexes, stau1/staufen.

Its subcellular location is the cytoplasm. The protein resides in the cell cortex. In terms of biological role, RNA-binding protein that binds to the 3'-UTR region of mRNAs and increases their stability. Involved in embryonic stem cells (ESCs) differentiation: preferentially binds mRNAs that are not methylated by N6-methyladenosine (m6A), stabilizing them, promoting ESCs differentiation. Binds to poly-U elements and AU-rich elements (AREs) in the 3'-UTR of target mRNAs. Acts cooperatively with cribp to stabilize AU-rich sequence (ARE)-containing mRNAs. May play a role during gastrulation. Required for the vegetal localization of vg1 mRNA. The polypeptide is ELAV-like protein 1 (Xenopus tropicalis (Western clawed frog)).